A 434-amino-acid chain; its full sequence is Enolase (434 aa).

Glutamine 168 contributes to the (2R)-2-phosphoglycerate binding site. Glutamate 210 functions as the Proton donor in the catalytic mechanism. Aspartate 247, glutamate 292, and aspartate 319 together coordinate Mg(2+). Positions 344, 373, 374, and 395 each coordinate (2R)-2-phosphoglycerate. The active-site Proton acceptor is lysine 344.

Belongs to the enolase family. Mg(2+) is required as a cofactor.

It is found in the cytoplasm. The protein resides in the secreted. The protein localises to the cell surface. The catalysed reaction is (2R)-2-phosphoglycerate = phosphoenolpyruvate + H2O. The protein operates within carbohydrate degradation; glycolysis; pyruvate from D-glyceraldehyde 3-phosphate: step 4/5. In terms of biological role, catalyzes the reversible conversion of 2-phosphoglycerate (2-PG) into phosphoenolpyruvate (PEP). It is essential for the degradation of carbohydrates via glycolysis. The protein is Enolase of Endomicrobium trichonymphae.